Reading from the N-terminus, the 241-residue chain is Pre-rRNA-processing protein pno1 (241 aa).

Positions 48–71 are disordered; that stretch reads APAKTSAEKKRGAKPQMRRVPIPP. Thr52 is modified (phosphothreonine). Residues 162–214 form the KH domain; that stretch reads GDHLSRAIGRIAGQGGKTKFAIENASRTRIVLADSKIHILGGFTNIRIAKDAV.

It belongs to the PNO1 family. Component of the small ribosomal subunit, ribosomal RNA processing complex (SSU RRP complex).

It localises to the cytoplasm. The protein localises to the nucleus. The protein resides in the nucleolus. Its function is as follows. Required for small ribosomal subunit (SSU) synthesis. Has a role in the processing of early nucleolar and late cytoplasmic pre-RNA species. The sequence is that of Pre-rRNA-processing protein pno1 (rbp28) from Schizosaccharomyces pombe (strain 972 / ATCC 24843) (Fission yeast).